Here is a 547-residue protein sequence, read N- to C-terminus: Chaperonin GroEL (547 aa).

Residues 30 to 33 (TLGP), Lys51, 87 to 91 (DGTTT), Gly415, 479 to 481 (NAA), and Asp495 each bind ATP.

It belongs to the chaperonin (HSP60) family. Forms a cylinder of 14 subunits composed of two heptameric rings stacked back-to-back. Interacts with the co-chaperonin GroES.

The protein resides in the cytoplasm. The enzyme catalyses ATP + H2O + a folded polypeptide = ADP + phosphate + an unfolded polypeptide.. Functionally, together with its co-chaperonin GroES, plays an essential role in assisting protein folding. The GroEL-GroES system forms a nano-cage that allows encapsulation of the non-native substrate proteins and provides a physical environment optimized to promote and accelerate protein folding. The sequence is that of Chaperonin GroEL from Cupriavidus necator (strain ATCC 17699 / DSM 428 / KCTC 22496 / NCIMB 10442 / H16 / Stanier 337) (Ralstonia eutropha).